The chain runs to 93 residues: Integration host factor subunit beta (93 aa).

Belongs to the bacterial histone-like protein family. As to quaternary structure, heterodimer of an alpha and a beta chain.

In terms of biological role, this protein is one of the two subunits of integration host factor, a specific DNA-binding protein that functions in genetic recombination as well as in transcriptional and translational control. The protein is Integration host factor subunit beta of Vibrio vulnificus (strain YJ016).